Here is a 713-residue protein sequence, read N- to C-terminus: Ribosomal RNA large subunit methyltransferase K/L (713 aa).

Residues 46-157 enclose the THUMP domain; sequence TAYRICLWSR…RDQATLSLDL (112 aa).

This sequence belongs to the methyltransferase superfamily. RlmKL family.

The protein localises to the cytoplasm. It carries out the reaction guanosine(2445) in 23S rRNA + S-adenosyl-L-methionine = N(2)-methylguanosine(2445) in 23S rRNA + S-adenosyl-L-homocysteine + H(+). The catalysed reaction is guanosine(2069) in 23S rRNA + S-adenosyl-L-methionine = N(2)-methylguanosine(2069) in 23S rRNA + S-adenosyl-L-homocysteine + H(+). In terms of biological role, specifically methylates the guanine in position 2445 (m2G2445) and the guanine in position 2069 (m7G2069) of 23S rRNA. This is Ribosomal RNA large subunit methyltransferase K/L from Syntrophotalea carbinolica (strain DSM 2380 / NBRC 103641 / GraBd1) (Pelobacter carbinolicus).